We begin with the raw amino-acid sequence, 303 residues long: ADP-ribosyl cyclase/cyclic ADP-ribose hydrolase 1 (303 aa).

The Cytoplasmic portion of the chain corresponds to 1–21 (MANYEFSQVSEDRPGCRLTRK). The chain crosses the membrane as a helical; Signal-anchor for type II membrane protein span at residues 22–44 (AQIGLGVGLLLLVALVVVVVIVL). Topologically, residues 45-303 (WPRSPLVWKG…PEHPSCRLNV (259 aa)) are extracellular. 3 cysteine pairs are disulfide-bonded: C69–C85, C102–C183, and C163–C176. Residue N103 is glycosylated (N-linked (GlcNAc...) asparagine). C122 is an active-site residue. N123 carries N-linked (GlcNAc...) asparagine glycosylation. The active site involves C204. Residues N212 and N222 are each glycosylated (N-linked (GlcNAc...) asparagine). Disulfide bonds link C257-C278 and C290-C299.

The protein belongs to the ADP-ribosyl cyclase family. In terms of assembly, homodimer. In terms of tissue distribution, spleen, liver, heart, thymus, thyroid gland, ileum, colon, cerebellum, salivary gland, adrenal gland, jejunum, islets of Langerhans and osteoclasts.

The protein resides in the cell membrane. The enzyme catalyses NAD(+) = cyclic ADP-beta-D-ribose + nicotinamide + H(+). It catalyses the reaction nicotinate + NADP(+) = nicotinate-adenine dinucleotide phosphate + nicotinamide. The catalysed reaction is NAD(+) + H2O = ADP-D-ribose + nicotinamide + H(+). With respect to regulation, both NAADP and cADPR synthesis are inhibited by nicotinic acid. Its function is as follows. Synthesizes the second messengers cyclic ADP-ribose and nicotinate-adenine dinucleotide phosphate, the former a second messenger for glucose-induced insulin secretion, the latter a Ca(2+) mobilizer. Also has cADPR hydrolase activity. Functionally, regulates osteoclastic bone resorption, probably via production of cyclic ADP-ribose and triggering of a cytosolic calcium ion signal through ryanodine receptor activation. In Rattus norvegicus (Rat), this protein is ADP-ribosyl cyclase/cyclic ADP-ribose hydrolase 1 (Cd38).